Consider the following 93-residue polypeptide: SH3 domain-binding glutamic acid-rich-like protein 3 (93 aa).

Ser-2 is modified (N-acetylserine). The Glutaredoxin domain occupies 2 to 93 (SGLRVYSTSV…NTLQEFLKLA (92 aa)). Thr-9 is a glycosylation site (O-linked (GalNAc...) threonine).

Belongs to the SH3BGR family. In terms of assembly, interacts with MYO1C (via its IQ motifs); the interaction is dependent on calcium and takes place at membrane ruffles. In terms of processing, may be glycosylated. As to expression, expressed in heart, liver, lung, kidney, spleen, thymus, ovarian follicles, skeletal muscle, brain, lymph node and mammary epithelial and stromal cells (at protein level).

The protein localises to the cytoplasm. It is found in the cytosol. Its subcellular location is the cell projection. It localises to the ruffle membrane. The protein resides in the nucleus. Could act as a modulator of glutaredoxin biological activity. May play a role in cytoskeleton organization. This Rattus norvegicus (Rat) protein is SH3 domain-binding glutamic acid-rich-like protein 3.